Reading from the N-terminus, the 143-residue chain is Mediator of RNA polymerase II transcription subunit 21 (143 aa).

Residues 53 to 130 are a coiled coil; the sequence is KEFEKNIDEL…KVRTLTQDFT (78 aa).

Belongs to the Mediator complex subunit 21 family. In terms of assembly, component of the Mediator complex.

It is found in the nucleus. Its function is as follows. Component of the Mediator complex, a coactivator involved in the regulated transcription of nearly all RNA polymerase II-dependent genes. Mediator functions as a bridge to convey information from gene-specific regulatory proteins to the basal RNA polymerase II transcription machinery. Mediator is recruited to promoters by direct interactions with regulatory proteins and serves as a scaffold for the assembly of a functional preinitiation complex with RNA polymerase II and the general transcription factors. This Kluyveromyces lactis (strain ATCC 8585 / CBS 2359 / DSM 70799 / NBRC 1267 / NRRL Y-1140 / WM37) (Yeast) protein is Mediator of RNA polymerase II transcription subunit 21 (SRB7).